The primary structure comprises 595 residues: DNA ligase (595 aa).

Residues 32–36 (DEKYD), 81–82 (SL), and Glu113 contribute to the NAD(+) site. The active-site N6-AMP-lysine intermediate is Lys115. NAD(+) contacts are provided by Arg136, Glu178, Lys296, and Lys320. The Zn(2+) site is built by Cys414, Cys417, Cys432, and Cys438.

This sequence belongs to the NAD-dependent DNA ligase family. LigA subfamily. It depends on Mg(2+) as a cofactor. Mn(2+) serves as cofactor.

The enzyme catalyses NAD(+) + (deoxyribonucleotide)n-3'-hydroxyl + 5'-phospho-(deoxyribonucleotide)m = (deoxyribonucleotide)n+m + AMP + beta-nicotinamide D-nucleotide.. Functionally, DNA ligase that catalyzes the formation of phosphodiester linkages between 5'-phosphoryl and 3'-hydroxyl groups in double-stranded DNA using NAD as a coenzyme and as the energy source for the reaction. It is essential for DNA replication and repair of damaged DNA. In Blochmanniella pennsylvanica (strain BPEN), this protein is DNA ligase.